Reading from the N-terminus, the 688-residue chain is Potassium-transporting ATPase ATP-binding subunit (688 aa).

4 helical membrane-spanning segments follow: residues 35 to 55 (VMFVVYLGSGLTTILWIAMLA), 62 to 82 (ALFTGNIALWLWFTVLFANFA), 219 to 239 (IALTILLTALTIIFLLVCVTL), and 260 to 280 (VLIALLVCLIPTTIGGLLSAI). Catalysis depends on D313, which acts as the 4-aspartylphosphate intermediate. ATP is bound by residues D350, E354, 383 to 390 (FSAMTRMS), and K401. Positions 524 and 528 each coordinate Mg(2+). 3 consecutive transmembrane segments (helical) span residues 594 to 614 (FAIIPAAFAVTYPQLNILNIM), 622 to 642 (AVLSTVIFNALIIVFLIPLAL), and 667 to 687 (GLIAPFIGIKLIDLLLTLLIL).

It belongs to the cation transport ATPase (P-type) (TC 3.A.3) family. Type IA subfamily. In terms of assembly, the system is composed of three essential subunits: KdpA, KdpB and KdpC.

The protein localises to the cell inner membrane. It catalyses the reaction K(+)(out) + ATP + H2O = K(+)(in) + ADP + phosphate + H(+). Its function is as follows. Part of the high-affinity ATP-driven potassium transport (or Kdp) system, which catalyzes the hydrolysis of ATP coupled with the electrogenic transport of potassium into the cytoplasm. This subunit is responsible for energy coupling to the transport system and for the release of the potassium ions to the cytoplasm. In Photorhabdus laumondii subsp. laumondii (strain DSM 15139 / CIP 105565 / TT01) (Photorhabdus luminescens subsp. laumondii), this protein is Potassium-transporting ATPase ATP-binding subunit.